The primary structure comprises 662 residues: Polyunsaturated fatty acid (12S)/(13S)-lipoxygenase, epidermal-type (662 aa).

One can recognise a PLAT domain in the interval 2–114; it reads VKYKILVATG…TICLTEGTAL (113 aa). A Lipoxygenase domain is found at 115-662; the sequence is KVTDDTQNLF…PSLVENSVTI (548 aa). The Fe cation site is built by histidine 360, histidine 365, histidine 540, and isoleucine 662.

Belongs to the lipoxygenase family. Fe cation is required as a cofactor. As to expression, expressed in epidermis.

It is found in the cytoplasm. The enzyme catalyses (5Z,8Z,11Z,14Z)-eicosatetraenoate + O2 = (12S)-hydroperoxy-(5Z,8Z,10E,14Z)-eicosatetraenoate. The catalysed reaction is 1-O-methyl-(9Z,12Z)-octadecadienoate + O2 = 1-O-methyl-(13S)-hydroperoxy-(9Z,11E)-octadecadienoate. It catalyses the reaction (8Z,11Z,14Z)-eicosatrienoate + O2 = (12S)-hydroperoxy-(8Z,10E,14Z)-eicosatrienoate. It carries out the reaction (5Z,8Z,11Z)-eicosatrienoate + O2 = (12S)-hydroperoxy-(5Z,8Z,10E)-eicosatrienoate. The enzyme catalyses 1-O-methyl-(5Z,8Z,11Z,14Z)-eicosatetraenoate + O2 = 1-O-methyl-(12S)-hydroperoxy-(5Z,8Z,10E,14Z)-eicosatetraenoate. The catalysed reaction is (9Z,12Z)-octadecadienoate + O2 = (13S)-hydroperoxy-(9Z,11E)-octadecadienoate. It catalyses the reaction (4Z,7Z,10Z,13Z,16Z,19Z)-docosahexaenoate + O2 = (14S)-hydroperoxy-(4Z,7Z,10Z,12E,16Z,19Z)-docosahexaenoate. It participates in lipid metabolism; hydroperoxy eicosatetraenoic acid biosynthesis. With respect to regulation, arachidonate 12-lipoxygenase activity is decreased when the pH decreases from 7.4 to 6.0. In terms of biological role, catalyzes the regio and stereo-specific incorporation of a single molecule of dioxygen into free and esterified polyunsaturated fatty acids generating lipid hydroperoxides that can be further reduced to the corresponding hydroxy species. Shows increasing catalytic activity within the series arachidonic acid &lt; 5,8,11-eicosatrienoic acid &lt; linoleic acid &lt; 8,11,14-eicosatrienoic acid. The chain is Polyunsaturated fatty acid (12S)/(13S)-lipoxygenase, epidermal-type from Mus musculus (Mouse).